Here is a 637-residue protein sequence, read N- to C-terminus: MSSDIKIKVQSFGRFLSNMVMPNIGAFIAWGIITALFIPTGWLPNETLAKLVGPMITYLLPLLIGYTGGKLVGGERGGVVGAITTMGVIVGADMPMFLGSMIAGPLGGWCIKHFDRWVDGKIKSGFEMLVNNFSAGIIGMILAILAFLGIGPIVEALSKMLAAGVNFMVVHDMLPLASIFVEPAKILFLNNAINHGIFSPLGIQQSHELGKSIFFLIEANPGPGMGVLLAYMFFGRGSAKQSAGGAAIIHFLGGIHEIYFPYVLMNPRLILAVILGGMTGVFTLTILGGGLVSPASPGSILAVLAMTPKGAYFANIAGVCAAMAVSFVVSAILLKTSKVKEEDDIEAATRRMQDMKAESKGASPLSAGDVTNDLSHVRKIIVACDAGMGSSAMGAGVLRKKIQDAGLSQISVTNSAINNLPPDVDLVITHRDLTERAMRQVPQAQHISLTNFLDSGLYTSLTERLVAAQRHTANEEKVKDSLKDSFDDSSANLFKLGAENIFLGRKAATKEEAIRFAGEQLVKGGYVEPEYVQAMLDREKLTPTYLGESIAVPHGTVEAKDRVLKTGVVFCQYPEGVRFGEEEDDIARLVIGIAARNNEHIQVITSLTNALDDESVIERLAHTTSVDEVLELLAGRK.

Topologically, residues 1-23 are cytoplasmic; the sequence is MSSDIKIKVQSFGRFLSNMVMPN. One can recognise a PTS EIIC type-2 domain in the interval 12–341; sequence FGRFLSNMVM…ILLKTSKVKE (330 aa). The chain crosses the membrane as a helical span at residues 24–45; the sequence is IGAFIAWGIITALFIPTGWLPN. Topologically, residues 46 to 49 are periplasmic; that stretch reads ETLA. Residues 50-70 form a helical membrane-spanning segment; that stretch reads KLVGPMITYLLPLLIGYTGGK. Residues 71-133 lie on the Cytoplasmic side of the membrane; sequence LVGGERGGVV…SGFEMLVNNF (63 aa). The chain crosses the membrane as a helical span at residues 134-155; sequence SAGIIGMILAILAFLGIGPIVE. At 156–164 the chain is on the periplasmic side; it reads ALSKMLAAG. The chain crosses the membrane as a helical span at residues 165–185; the sequence is VNFMVVHDMLPLASIFVEPAK. Topologically, residues 186-272 are cytoplasmic; that stretch reads ILFLNNAINH…VLMNPRLILA (87 aa). A helical membrane pass occupies residues 273-292; it reads VILGGMTGVFTLTILGGGLV. The Periplasmic segment spans residues 293-312; that stretch reads SPASPGSILAVLAMTPKGAY. The helical transmembrane segment at 313–334 threads the bilayer; the sequence is FANIAGVCAAMAVSFVVSAILL. At 335-637 the chain is on the cytoplasmic side; it reads KTSKVKEEDD…EVLELLAGRK (303 aa). The 96-residue stretch at 378–473 folds into the PTS EIIB type-2 domain; sequence RKIIVACDAG…RLVAAQRHTA (96 aa). Cys384 serves as the catalytic Phosphocysteine intermediate; for EIIB activity. Position 384 is a phosphocysteine; by EIIA (Cys384). The PTS EIIA type-2 domain occupies 494–636; it reads FKLGAENIFL…DEVLELLAGR (143 aa). His554 functions as the Tele-phosphohistidine intermediate; for EIIA activity in the catalytic mechanism. A Phosphohistidine; by HPr modification is found at His554.

As to quaternary structure, homodimer. Post-translationally, an intramolecular phosphotransfer takes places between His-554 and Cys-384.

The protein localises to the cell inner membrane. The catalysed reaction is D-mannitol(out) + N(pros)-phospho-L-histidyl-[protein] = D-mannitol 1-phosphate(in) + L-histidyl-[protein]. Its function is as follows. The phosphoenolpyruvate-dependent sugar phosphotransferase system (sugar PTS), a major carbohydrate active transport system, catalyzes the phosphorylation of incoming sugar substrates concomitantly with their translocation across the cell membrane. This system is involved in D-mannitol transport. Also able to use D-mannonic acid. The polypeptide is PTS system mannitol-specific EIICBA component (Escherichia coli (strain K12)).